Consider the following 121-residue polypeptide: Ribosome-binding factor A (121 aa).

The protein belongs to the RbfA family. In terms of assembly, monomer. Binds 30S ribosomal subunits, but not 50S ribosomal subunits or 70S ribosomes.

The protein localises to the cytoplasm. Its function is as follows. One of several proteins that assist in the late maturation steps of the functional core of the 30S ribosomal subunit. Associates with free 30S ribosomal subunits (but not with 30S subunits that are part of 70S ribosomes or polysomes). Required for efficient processing of 16S rRNA. May interact with the 5'-terminal helix region of 16S rRNA. The polypeptide is Ribosome-binding factor A (Hydrogenovibrio crunogenus (strain DSM 25203 / XCL-2) (Thiomicrospira crunogena)).